The sequence spans 146 residues: Hemoglobin subunit beta-2 (146 aa).

The 145-residue stretch at 2-146 (HWSAEEKQLI…VAHALARRYH (145 aa)) folds into the Globin domain. Heme b contacts are provided by His63 and His92.

This sequence belongs to the globin family. Heterotetramer of two alpha chains and two beta chains. Red blood cells.

Involved in oxygen transport from the lung to the various peripheral tissues. The chain is Hemoglobin subunit beta-2 (HBB2) from Naja naja (Indian cobra).